A 402-amino-acid polypeptide reads, in one-letter code: Dihydrolipoyllysine-residue acetyltransferase component of pyruvate dehydrogenase complex (402 aa).

Positions 1–69 constitute a Lipoyl-binding domain; that stretch reads MPDIGLEEVE…KTSSIIMIFK (69 aa). The residue at position 35 (K35) is an N6-lipoyllysine. Residues 109 to 146 enclose the Peripheral subunit-binding (PSBD) domain; that stretch reads HATPVVRRLARHLNVDLKNITPSGPKNRILKEDIELYI. H375 is an active-site residue.

Belongs to the 2-oxoacid dehydrogenase family. As to quaternary structure, forms a 24-polypeptide structural core with octahedral symmetry. The cofactor is (R)-lipoate.

It catalyses the reaction N(6)-[(R)-dihydrolipoyl]-L-lysyl-[protein] + acetyl-CoA = N(6)-[(R)-S(8)-acetyldihydrolipoyl]-L-lysyl-[protein] + CoA. Its function is as follows. The pyruvate dehydrogenase complex catalyzes the overall conversion of pyruvate to acetyl-CoA and CO(2). It contains multiple copies of three enzymatic components: pyruvate dehydrogenase (E1), dihydrolipoamide acetyltransferase (E2) and lipoamide dehydrogenase (E3). The polypeptide is Dihydrolipoyllysine-residue acetyltransferase component of pyruvate dehydrogenase complex (aceF) (Buchnera aphidicola subsp. Schizaphis graminum (strain Sg)).